A 459-amino-acid chain; its full sequence is MRASILPLTLFLATLAGAQLSGPVGPLVDYSTKARNQTCNIIDYGAVADGKTDISQALLDAWGNCSVGGLVYIPPGNYSLAEDIELKHGQSSAIQLDGVVMRGHRGSYQMILIRDCNDFEFFSGNSRGAIQGFGYEYLQNDTYGERLLRIQEVNNFSVHGFALIDSPSYYIVFDTVTSGEVYNILIRGVTSVGATDAIDVWGENMWFHDIEVSNGDECVTVKSPAHNYLIENIYCNLSGGTAIGSLGTGTNISDIHYRNLYMNQADACFLKSNNGDGIVKNIIWENVIVHGGPYPLAIDEAWGDDRGSVGVQVSNLTFRNWHGESVSASRPVIRLQCDSDVPCYDITIENVNLWANDSNYVVWQCENAYGDGACLSSAEGTKDLETFTSKQTITATPSYAAPTMAADFTFNLPSTSPFTIPPMPTSFYPGATPISTLLHLHGAGGLPSASPISHHRRHQ.

A signal peptide spans 1 to 18; it reads MRASILPLTLFLATLAGA. Residues asparagine 36, asparagine 64, asparagine 77, asparagine 140, and asparagine 155 are each glycosylated (N-linked (GlcNAc...) asparagine). A disulfide bridge connects residues cysteine 39 and cysteine 65. Catalysis depends on aspartate 216, which acts as the Proton donor. Cysteine 218 and cysteine 235 are disulfide-bonded. Residues asparagine 236 and asparagine 251 are each glycosylated (N-linked (GlcNAc...) asparagine). The active site involves histidine 290. N-linked (GlcNAc...) asparagine glycosylation occurs at asparagine 315. Residues cysteine 337 and cysteine 343 are joined by a disulfide bond. Residue asparagine 356 is glycosylated (N-linked (GlcNAc...) asparagine). A disulfide bridge links cysteine 365 with cysteine 374.

The protein belongs to the glycosyl hydrolase 28 family.

Its subcellular location is the secreted. Functionally, pectinolytic enzymes consist of four classes of enzymes: pectine lyase, polygalacturonase, pectin methylesterase and rhamnogalacturonase. Hydrolyzes alpha-D-galacturonopyranosyl-(1,2)-alpha-L-rhamnopyranosyl linkages in the backbone of the hairy regions of pectins. This chain is Probable rhamnogalacturonase C (rhgC), found in Aspergillus niger (strain ATCC MYA-4892 / CBS 513.88 / FGSC A1513).